A 146-amino-acid chain; its full sequence is Hemoglobin subunit beta (146 aa).

Positions 2–146 (QWSESERTII…VVSALGKQYH (145 aa)) constitute a Globin domain. Heme b-binding residues include His63 and His92.

It belongs to the globin family. As to quaternary structure, heterotetramer of two alpha chains and two beta chains. Red blood cells.

Functionally, involved in oxygen transport from gills to the various peripheral tissues. This is Hemoglobin subunit beta (hbb) from Pogonophryne scotti (Saddleback plunderfish).